The chain runs to 169 residues: MERAIFAGGCFWCMVQPFEEQAGILSVRSGYTGGHVHNPSYEQVCSKTTGHTEAVEIIFDPSLISYSDLVELYWAQTDPTDAFGQFEDRGDNYRPVIYYTDERQREIAERSKQTLQASGRFDQPIVTSIEPAEPFYLAEDYHQGFYQKNPERYAQSSAIRHQFLEEHWQ.

C10 is an active-site residue.

It belongs to the MsrA Met sulfoxide reductase family.

It carries out the reaction L-methionyl-[protein] + [thioredoxin]-disulfide + H2O = L-methionyl-(S)-S-oxide-[protein] + [thioredoxin]-dithiol. The enzyme catalyses [thioredoxin]-disulfide + L-methionine + H2O = L-methionine (S)-S-oxide + [thioredoxin]-dithiol. Has an important function as a repair enzyme for proteins that have been inactivated by oxidation. Catalyzes the reversible oxidation-reduction of methionine sulfoxide in proteins to methionine. The sequence is that of Peptide methionine sulfoxide reductase MsrA from Streptococcus equi subsp. equi (strain 4047).